Reading from the N-terminus, the 289-residue chain is uncharacterized protein (289 aa).

Residues 268-289 (SDDGYETQWSDGPYSIPSGLSD) are disordered.

This is an uncharacterized protein from Zea mays (Maize).